The chain runs to 252 residues: Imidazole glycerol phosphate synthase subunit HisF (252 aa).

Active-site residues include Asp-11 and Asp-130.

The protein belongs to the HisA/HisF family. Heterodimer of HisH and HisF.

Its subcellular location is the cytoplasm. The enzyme catalyses 5-[(5-phospho-1-deoxy-D-ribulos-1-ylimino)methylamino]-1-(5-phospho-beta-D-ribosyl)imidazole-4-carboxamide + L-glutamine = D-erythro-1-(imidazol-4-yl)glycerol 3-phosphate + 5-amino-1-(5-phospho-beta-D-ribosyl)imidazole-4-carboxamide + L-glutamate + H(+). It functions in the pathway amino-acid biosynthesis; L-histidine biosynthesis; L-histidine from 5-phospho-alpha-D-ribose 1-diphosphate: step 5/9. Its function is as follows. IGPS catalyzes the conversion of PRFAR and glutamine to IGP, AICAR and glutamate. The HisF subunit catalyzes the cyclization activity that produces IGP and AICAR from PRFAR using the ammonia provided by the HisH subunit. The chain is Imidazole glycerol phosphate synthase subunit HisF from Bacillus pumilus (strain SAFR-032).